A 563-amino-acid chain; its full sequence is Type 2 DNA topoisomerase 6 subunit B (563 aa).

ATP-binding positions include Asn46, Asp78, Thr99 to Lys100, Gly109 to Ser116, and Lys471.

The protein belongs to the TOP6B family. In terms of assembly, homodimer. Heterotetramer of two Top6A and two Top6B chains.

The enzyme catalyses ATP-dependent breakage, passage and rejoining of double-stranded DNA.. Relaxes both positive and negative superturns and exhibits a strong decatenase activity. This is Type 2 DNA topoisomerase 6 subunit B from Thermococcus onnurineus (strain NA1).